A 142-amino-acid polypeptide reads, in one-letter code: Nucleoside diphosphate kinase (142 aa).

Residues lysine 11, phenylalanine 59, arginine 87, threonine 93, arginine 104, and asparagine 114 each contribute to the ATP site. Histidine 117 serves as the catalytic Pros-phosphohistidine intermediate.

This sequence belongs to the NDK family. In terms of assembly, homotetramer. Mg(2+) serves as cofactor.

The protein resides in the cytoplasm. The enzyme catalyses a 2'-deoxyribonucleoside 5'-diphosphate + ATP = a 2'-deoxyribonucleoside 5'-triphosphate + ADP. The catalysed reaction is a ribonucleoside 5'-diphosphate + ATP = a ribonucleoside 5'-triphosphate + ADP. Functionally, major role in the synthesis of nucleoside triphosphates other than ATP. The ATP gamma phosphate is transferred to the NDP beta phosphate via a ping-pong mechanism, using a phosphorylated active-site intermediate. This Hahella chejuensis (strain KCTC 2396) protein is Nucleoside diphosphate kinase.